The following is a 468-amino-acid chain: Probable Xaa-Pro aminopeptidase PEPP (468 aa).

Mn(2+)-binding residues include Asp-264, Asp-275, Glu-398, and Glu-438.

It belongs to the peptidase M24B family. The cofactor is Mn(2+).

It catalyses the reaction Release of any N-terminal amino acid, including proline, that is linked to proline, even from a dipeptide or tripeptide.. Catalyzes the removal of a penultimate prolyl residue from the N-termini of peptides. The sequence is that of Probable Xaa-Pro aminopeptidase PEPP (PEPP) from Ajellomyces dermatitidis (strain ER-3 / ATCC MYA-2586) (Blastomyces dermatitidis).